The following is a 139-amino-acid chain: MKKTKLLNASLSHYIATLGHTDSLVICDAGLPISNQVERVDLALEAGVPGFLQTVDVVISEMFVEHAVVAKEIREKNPQIHDALLDSLRKLSEQQGNCIAVEYVEHEEFKVLSSESKAAVRTGEFSPYANIILYSGVPF.

H20 serves as the catalytic Proton donor. Substrate-binding positions include D28, H106, and Y128–N130.

This sequence belongs to the RbsD / FucU family. RbsD subfamily. In terms of assembly, homodecamer.

Its subcellular location is the cytoplasm. The enzyme catalyses beta-D-ribopyranose = beta-D-ribofuranose. It functions in the pathway carbohydrate metabolism; D-ribose degradation; D-ribose 5-phosphate from beta-D-ribopyranose: step 1/2. Its function is as follows. Catalyzes the interconversion of beta-pyran and beta-furan forms of D-ribose. The polypeptide is D-ribose pyranase (Histophilus somni (strain 2336) (Haemophilus somnus)).